The chain runs to 5104 residues: Malformin synthetase mlfA (5104 aa).

Residues 225–616 (ERHAVNRPHS…CGRADTQVKL (392 aa)) form an adenylation 1 region. Positions 757 to 830 (SRLEQEIQLA…EAASLAEVQE (74 aa)) constitute a Carrier 1 domain. O-(pantetheine 4'-phosphoryl)serine is present on Ser-791. A condensation 1 region spans residues 868–1299 (EDVFPCTTMQ…ALNTLSLLQA (432 aa)). An adenylation 2 region spans residues 1327 to 1716 (DRWVTRQPEG…GRKDTQVKLR (390 aa)). The region spanning 1854–1931 (TPASELERTL…QLAAEFGGPA (78 aa)) is the Carrier 2 domain. Ser-1891 carries the O-(pantetheine 4'-phosphoryl)serine modification. Disordered stretches follow at residues 1928–1961 (GGPA…DGVD) and 1998–2025 (TNKT…KVDS). 2 stretches are compositionally biased toward low complexity: residues 1934–1958 (SASS…STND) and 2003–2013 (SVSSSSSSSSS). The condensation 2 stretch occupies residues 2066 to 2481 (EDIYPATPLQ…TVSYSDKEAL (416 aa)). The adenylation 3 stretch occupies residues 2504–2896 (VRTPHAPAVC…IGRRDGQLKL (393 aa)). Residues 3032 to 3108 (RPVTSQEREM…QLICHLNTIR (77 aa)) enclose the Carrier 3 domain. Position 3069 is an O-(pantetheine 4'-phosphoryl)serine (Ser-3069). Condensation stretches follow at residues 3125-3590 (WVAL…TYDQ) and 3611-4029 (NIYP…EQLV). Residues 4054–4444 (HSSREAVCAW…VGRKDNQIKF (391 aa)) are adenylation 4. The Carrier 4 domain maps to 4578–4654 (MPSTAAERKM…DLSDQARSLI (77 aa)). An O-(pantetheine 4'-phosphoryl)serine modification is found at Ser-4615. The condensation 5 stretch occupies residues 4691 to 5018 (DVLPTTSFQR…LQTIVQHQNN (328 aa)).

Belongs to the NRP synthetase family.

Its pathway is secondary metabolite biosynthesis. Functionally, nonribosomal peptide synthetase; part of the gene cluster that mediates the biosynthesis of malformins, cyclic pentapeptides with a disulfide bond between 2 consecutive cysteins, that show potential anti-tumor as well as antimalarial and antitrypanosomal properties. The nonribosomal peptide synthetase mlfA is responsible of the formation of the cyclic pentapeptide. The malformin biosynthesis clusters in malformin-producing fungi also contain enzymes involved in the formation of the disulfide bond between the two consecutive cysteins within malformins, in addition to additional tailoring enzymes such as methyltransferases or oxidoreductases. They are also composed of up to 4 major facilitator superfamily transporters, and transcription factors probably involved in the regulation of the expression of those clusters. The protein is Malformin synthetase mlfA of Aspergillus vadensis (strain CBS 113365 / IMI 142717 / IBT 24658).